The primary structure comprises 310 residues: Ribosomal protein uL3 glutamine methyltransferase (310 aa).

This sequence belongs to the protein N5-glutamine methyltransferase family. PrmB subfamily.

It carries out the reaction L-glutaminyl-[ribosomal protein uL3] + S-adenosyl-L-methionine = N(5)-methyl-L-glutaminyl-[ribosomal protein uL3] + S-adenosyl-L-homocysteine + H(+). Its function is as follows. Specifically methylates large ribosomal subunit protein uL3 on 'Gln-150'. The polypeptide is Ribosomal protein uL3 glutamine methyltransferase (Salmonella typhi).